We begin with the raw amino-acid sequence, 237 residues long: B3 domain-containing protein Os06g0194400 (237 aa).

Disordered regions lie at residues Met-1 to Glu-23 and Ser-38 to Lys-82. Residues Phe-139–Ser-230 constitute a DNA-binding region (TF-B3).

It is found in the nucleus. This chain is B3 domain-containing protein Os06g0194400, found in Oryza sativa subsp. japonica (Rice).